We begin with the raw amino-acid sequence, 231 residues long: uncharacterized protein (231 aa).

Residues 86 to 106 form a helical membrane-spanning segment; the sequence is LIILFVIGLIITIIGLLMYEP.

It localises to the membrane. This is an uncharacterized protein from Methanocaldococcus jannaschii (strain ATCC 43067 / DSM 2661 / JAL-1 / JCM 10045 / NBRC 100440) (Methanococcus jannaschii).